The chain runs to 689 residues: Solute carrier family 22 member 23 (689 aa).

2 disordered regions span residues 1–55 (MAID…PLPA) and 162–188 (TASW…GKGN). Asn-24 carries N-linked (GlcNAc...) asparagine glycosylation. Positions 165–177 (WGTTSNRSNSSDT) are enriched in polar residues. 2 helical membrane passes run 229-249 (FSLL…ADWV) and 253-273 (PVLL…ALSV). N-linked (GlcNAc...) asparagine glycosylation occurs at Asn-274. Transmembrane regions (helical) follow at residues 283–303 (FFEG…RIEL), 310–330 (FIIT…MPGL), 339–359 (VLQA…SIFP), 462–482 (ADYY…CLVV), 489–509 (GGLL…LGLL), 541–561 (IAFS…SVFF), 572–592 (CGGL…APII), and 601–621 (FLHH…ILLL).

This sequence belongs to the major facilitator (TC 2.A.1) superfamily. Organic cation transporter (TC 2.A.1.19) family. In terms of tissue distribution, expressed in many tissues, including brain, spinal cord, kidney, liver, eye, adipose tissue, lung, epididymis, adrenal gland, pineal gland, skeletal muscle, heart, spleen, thymus, ovary, uterus, testis and epididymis.

It localises to the membrane. The protein is Solute carrier family 22 member 23 (Slc22a23) of Rattus norvegicus (Rat).